A 443-amino-acid polypeptide reads, in one-letter code: MAGLVLSGCAIKPFSQSLPIPTKRFITNPSNINLLHPKDPIFSPNFHGFSRWAVKVSAPLRIPSIDQQDLDLDLERERISSLDVQEEEIFDAGAPPPFKLADIRAAIPKRCWVKDPWRSMSYVVRDVAIVLGLAAAAAHLNNWLVWPLYWAAQGTMFWALFVLGHDCGHGSFSNNAKLNSVVGHLLHSSILVPYHGWRISHRTHHQNHGHVENDESWHPLTEKTFKSLDWITRTLRFTLPFPMLAYPFYLWNRSPGKSGSHFDPSSDLFVPAEQKDVITSTICWTTMLALLFGLNFVVGPVQMLKLYGIPYLINVMWLDFVTYLHHHGHEDKLPWYRGKEWSYLRGGLTTIDRDYGWINNIHHDIGTHVIHHLFPQIPHYHLIEATEAAKPVLGKYYREPKKSSPIPFHLLGELVRSLKKDHYVSDTGDVLYYQTDDKLSKEK.

The transit peptide at 1-51 (MAGLVLSGCAIKPFSQSLPIPTKRFITNPSNINLLHPKDPIFSPNFHGFSR) directs the protein to the chloroplast. Helical transmembrane passes span 120–140 (MSYV…AAHL) and 143–163 (WLVW…LFVL). The Histidine box-1 signature appears at 165–169 (HDCGH). The Histidine box-2 signature appears at 201–205 (HRTHH). Transmembrane regions (helical) follow at residues 281–301 (TICW…VGPV) and 304–324 (LKLY…VTYL). The short motif at 368–372 (HVIHH) is the Histidine box-3 element.

Belongs to the fatty acid desaturase type 1 family. Highly expressed in leaves and cotyledons, while no or little expression detected in mature seeds, roots and stems.

It is found in the plastid. The protein localises to the chloroplast membrane. The catalysed reaction is a (7Z,10Z)-hexadecadienoyl-containing glycerolipid + 2 reduced [2Fe-2S]-[ferredoxin] + O2 + 2 H(+) = a (7Z,10Z,13Z)-hexadecatrienoyl-containing glycerolipid + 2 oxidized [2Fe-2S]-[ferredoxin] + 2 H2O. It carries out the reaction a (9Z,12Z)-octadecadienoyl-containing glycerolipid + 2 reduced [2Fe-2S]-[ferredoxin] + O2 + 2 H(+) = (9Z,12Z,15Z)-octadecatrienoyl-containing glycerolipid + 2 oxidized [2Fe-2S]-[ferredoxin] + 2 H2O. Its pathway is lipid metabolism; polyunsaturated fatty acid biosynthesis. In terms of biological role, chloroplast omega-3 fatty acid desaturase introduces the third double bond in the biosynthesis of 18:3, and probably also 16:3 fatty acids, important constituents of plant membranes. It is thought to use ferredoxin as an electron donor and to act on fatty acids esterified to galactolipids, sulfolipids and phosphatidylglycerol. This is sn-2 acyl-lipid omega-3 desaturase (ferredoxin), chloroplastic from Helianthus annuus (Common sunflower).